We begin with the raw amino-acid sequence, 43 residues long: Potassium channel toxin gamma-KTx 4.7 (43 aa).

Cystine bridges form between Cys-5–Cys-23, Cys-11–Cys-34, Cys-20–Cys-39, and Cys-24–Cys-41.

This sequence belongs to the ergtoxin family. Gamma-KTx 4 subfamily. Expressed by the venom gland.

The protein localises to the secreted. Reversibly blocks Kv11/ERG potassium channels. In Centruroides limpidus (Mexican scorpion), this protein is Potassium channel toxin gamma-KTx 4.7.